Reading from the N-terminus, the 142-residue chain is Protein NIM1-INTERACTING 1 (142 aa).

Residues 47–53 are involved in NPR1/NIM1 interaction; the sequence is DTFFKLI. The Nuclear localization signal motif lies at 60–64; it reads RKRRR. Disordered stretches follow at residues 63–86 and 108–142; these read RREE…RSGI and MFVS…NLAL. Positions 110-141 form a coiled coil; the sequence is VSDHKEENTKVEQEEDQTEERNEDKALDLNLA. A compositionally biased stretch (basic and acidic residues) spans 111-121; sequence SDHKEENTKVE.

It belongs to the NPR1-interactor family. In terms of assembly, interacts with NPR1 C-terminal region.

The protein resides in the nucleus. The polypeptide is Protein NIM1-INTERACTING 1 (Arabidopsis thaliana (Mouse-ear cress)).